The chain runs to 333 residues: MASSSATAVPLTREQVVPSRQRIKLPAWLEVAKPRLIPLLLATTLGGMALTEGWPLSSPRLVCTLGGGALAAAAAGVLNCLWEQELDGRMQRTSGRALPSGRLSPTAAFAGAVSCALAAATLLVSGVNCLAAGLSLLGLCSYVLLYTALLKPRTTQNIVIGGVAGAIPPLVGAAAATGHVGLGGWWLFALVMVWTPAHFWALALLLRDDYRAVGIPMLPVVKGPVVTARAIRRYGWATVLLSFLGVWALPEGGLLYGLLLLPFNGRLLQMVERLGAEPDSTERAKGLFRWSILYLFGICLLLVFSRQSGAAVFDLQLRGWLAALPAGLPGINA.

The next 8 helical transmembrane spans lie at 36 to 56 (LIPLLLATTLGGMALTEGWPL), 61 to 81 (LVCTLGGGALAAAAAGVLNCL), 107 to 127 (AAFAGAVSCALAAATLLVSGV), 130 to 150 (LAAGLSLLGLCSYVLLYTALL), 158 to 178 (IVIGGVAGAIPPLVGAAAATG), 186 to 206 (WLFALVMVWTPAHFWALALLL), 243 to 263 (FLGVWALPEGGLLYGLLLLPF), and 284 to 304 (AKGLFRWSILYLFGICLLLVF).

Belongs to the UbiA prenyltransferase family. Protoheme IX farnesyltransferase subfamily.

Its subcellular location is the cell inner membrane. The catalysed reaction is heme b + (2E,6E)-farnesyl diphosphate + H2O = Fe(II)-heme o + diphosphate. It functions in the pathway porphyrin-containing compound metabolism; heme O biosynthesis; heme O from protoheme: step 1/1. Its function is as follows. Converts heme B (protoheme IX) to heme O by substitution of the vinyl group on carbon 2 of heme B porphyrin ring with a hydroxyethyl farnesyl side group. This Synechococcus sp. (strain WH7803) protein is Protoheme IX farnesyltransferase.